The following is a 331-amino-acid chain: 6-phosphogluconolactonase (331 aa).

Lysine 287 is subject to N6-acetyllysine.

The protein belongs to the cycloisomerase 2 family.

It catalyses the reaction 6-phospho-D-glucono-1,5-lactone + H2O = 6-phospho-D-gluconate + H(+). It functions in the pathway carbohydrate degradation; pentose phosphate pathway; D-ribulose 5-phosphate from D-glucose 6-phosphate (oxidative stage): step 2/3. In terms of biological role, catalyzes the hydrolysis of 6-phosphogluconolactone to 6-phosphogluconate. The polypeptide is 6-phosphogluconolactonase (Escherichia coli O139:H28 (strain E24377A / ETEC)).